Reading from the N-terminus, the 317-residue chain is Protein-L-isoaspartate O-methyltransferase (317 aa).

S59 is an active-site residue.

Belongs to the methyltransferase superfamily. L-isoaspartyl/D-aspartyl protein methyltransferase family. In terms of assembly, monomer.

The protein localises to the cytoplasm. The catalysed reaction is [protein]-L-isoaspartate + S-adenosyl-L-methionine = [protein]-L-isoaspartate alpha-methyl ester + S-adenosyl-L-homocysteine. Its function is as follows. Catalyzes the methyl esterification of L-isoaspartyl residues in peptides and proteins that result from spontaneous decomposition of normal L-aspartyl and L-asparaginyl residues. It plays a role in the repair and/or degradation of damaged proteins. The chain is Protein-L-isoaspartate O-methyltransferase (pcm) from Thermotoga maritima (strain ATCC 43589 / DSM 3109 / JCM 10099 / NBRC 100826 / MSB8).